A 549-amino-acid polypeptide reads, in one-letter code: Myotubularin-related protein 9 (549 aa).

Methionine 1 carries the post-translational modification N-acetylmethionine. In terms of domain architecture, GRAM spans 4 to 99 (AELIKTPRVD…LNIASSIEAL (96 aa)). Residues 123–498 (GWHSFLPEQE…QSLPLWEGIF (376 aa)) enclose the Myotubularin phosphatase domain. The stretch at 508-542 (LDEAYEEMVNIIEYNKELQAKVNILRRQLAELETE) forms a coiled coil. Serine 548 bears the Phosphoserine mark.

Belongs to the protein-tyrosine phosphatase family. Non-receptor class myotubularin subfamily. Homodimer. Heterodimer (via C-terminus) with lipid phosphatase MTMR6 (via C-terminus). Heterodimer (via coiled coil domain) with lipid phosphatase MTMR7 (via C-terminus). Heterodimer with lipid phosphatase MTMR8. In terms of tissue distribution, expressed in many tissues.

It localises to the cytoplasm. Its subcellular location is the cell projection. The protein localises to the ruffle membrane. The protein resides in the perinuclear region. It is found in the endoplasmic reticulum. In terms of biological role, acts as an adapter for myotubularin-related phosphatases. Increases lipid phosphatase MTMR6 catalytic activity, specifically towards phosphatidylinositol 3,5-bisphosphate and MTMR6 binding affinity for phosphorylated phosphatidylinositols. Positively regulates lipid phosphatase MTMR7 catalytic activity. Increases MTMR8 catalytic activity towards phosphatidylinositol 3-phosphate. The formation of the MTMR6-MTMR9 complex, stabilizes both MTMR6 and MTMR9 protein levels. Stabilizes MTMR8 protein levels. Plays a role in the late stages of macropinocytosis possibly by regulating MTMR6-mediated dephosphorylation of phosphatidylinositol 3-phosphate in membrane ruffles. Negatively regulates autophagy, in part via its association with MTMR8. Negatively regulates DNA damage-induced apoptosis, in part via its association with MTMR6. Does not bind mono-, di- and tri-phosphorylated phosphatidylinositols, phosphatidic acid and phosphatidylserine. This is Myotubularin-related protein 9 (MTMR9) from Homo sapiens (Human).